The following is a 678-amino-acid chain: Protein CASP (678 aa).

Topologically, residues M1–T619 are cytoplasmic. 2 coiled-coil regions span residues L67–S450 and L502–S556. S586 carries the phosphoserine modification. The chain crosses the membrane as a helical; Anchor for type IV membrane protein span at residues I620 to A640. The Lumenal portion of the chain corresponds to W641–Q678.

The protein belongs to the CASP family. Homodimer; disulfide-linked. Interacts with GOLGA5.

The protein resides in the golgi apparatus membrane. May be involved in intra-Golgi retrograde transport. The polypeptide is Protein CASP (CUX1) (Homo sapiens (Human)).